Consider the following 348-residue polypeptide: MDLQTKLEQLFQQNNDTIKKVKSLDELNQIRVQLLGKKGPITGVLRGMKDLSAEERPKVGAFANKIRDDLSAVIEARKAQLEQAVINAKLASETVDVTLPGDPVEAGTPHIITQIMDDLEGFFMGMGYQVLTGPEVEEDHYNFEMMNIPKDHPARDMQETFYITNELLMRSQTSPMQARTMEKHDFTKGPLKMISPGVVYRRDDDDATHSHQFHQMEGLVIDKHITMADLKGTLLAMCQHVFGKDRTIRLRPSYFPFTEPSVEVDVSCFRCGGKGCPVCKYTGWIEVLGAGMVHPNVLQAANIDADVYGGFAFGLGPDRFAMLKYGIDDIRSFYTDDLRFLTQFSQEG.

Glu-259 serves as a coordination point for Mg(2+).

Belongs to the class-II aminoacyl-tRNA synthetase family. Phe-tRNA synthetase alpha subunit type 1 subfamily. As to quaternary structure, tetramer of two alpha and two beta subunits. Requires Mg(2+) as cofactor.

The protein resides in the cytoplasm. It carries out the reaction tRNA(Phe) + L-phenylalanine + ATP = L-phenylalanyl-tRNA(Phe) + AMP + diphosphate + H(+). The protein is Phenylalanine--tRNA ligase alpha subunit of Lacticaseibacillus casei (strain BL23) (Lactobacillus casei).